A 169-amino-acid polypeptide reads, in one-letter code: Acetolactate synthase small subunit (169 aa).

Positions 8–85 constitute an ACT domain; that stretch reads TLSVLVEDTP…KVVEQEADNS (78 aa).

The protein belongs to the acetolactate synthase small subunit family. As to quaternary structure, dimer of large and small chains.

The enzyme catalyses 2 pyruvate + H(+) = (2S)-2-acetolactate + CO2. It participates in amino-acid biosynthesis; L-isoleucine biosynthesis; L-isoleucine from 2-oxobutanoate: step 1/4. The protein operates within amino-acid biosynthesis; L-valine biosynthesis; L-valine from pyruvate: step 1/4. The protein is Acetolactate synthase small subunit (ilvH) of Mycobacterium leprae (strain TN).